Reading from the N-terminus, the 521-residue chain is Chromaffin granule amine transporter (521 aa).

Topologically, residues Met-1 to Lys-21 are cytoplasmic. Residues Leu-22 to Val-42 traverse the membrane as a helical segment. The Lumenal, vesicle portion of the chain corresponds to Pro-43–Arg-135. N-linked (GlcNAc...) asparagine glycans are attached at residues Asn-58, Asn-87, and Asn-104. A helical membrane pass occupies residues Ile-136–Gly-155. The Cytoplasmic segment spans residues Pro-156 to His-164. A helical membrane pass occupies residues Ile-165–Gly-185. The Lumenal, vesicle portion of the chain corresponds to Thr-186 to Arg-194. A helical membrane pass occupies residues Thr-195–Val-215. At Tyr-216–Arg-224 the chain is on the cytoplasmic side. The helical transmembrane segment at Ala-225–Met-247 threads the bilayer. The Lumenal, vesicle portion of the chain corresponds to Tyr-248–Lys-253. A helical transmembrane segment spans residues Ser-254–Trp-276. Over Pro-277 to Asp-296 the chain is Cytoplasmic. A helical transmembrane segment spans residues Pro-297–Leu-316. At Glu-317 to Glu-332 the chain is on the lumenal, vesicle side. The chain crosses the membrane as a helical span at residues Trp-333 to Ala-357. The Cytoplasmic portion of the chain corresponds to Asn-358 to Arg-362. Residues Trp-363 to Ala-383 traverse the membrane as a helical segment. The Lumenal, vesicle portion of the chain corresponds to His-384–Ala-394. Residues Gly-395–Val-415 traverse the membrane as a helical segment. At Asp-416–His-419 the chain is on the cytoplasmic side. Residues Thr-420–Ile-440 form a helical membrane-spanning segment. Over Gly-441–Gly-445 the chain is Lumenal, vesicle. Residues Gly-446–Ile-467 traverse the membrane as a helical segment. Topologically, residues Tyr-468 to Glu-521 are cytoplasmic.

Belongs to the major facilitator superfamily. Vesicular transporter family. Adrenal gland.

Its subcellular location is the cytoplasmic vesicle. It localises to the secretory vesicle membrane. It is found in the secretory vesicle. The protein resides in the synaptic vesicle membrane. The catalysed reaction is serotonin(in) + 2 H(+)(out) = serotonin(out) + 2 H(+)(in). It carries out the reaction (R)-noradrenaline(in) + 2 H(+)(out) = (R)-noradrenaline(out) + 2 H(+)(in). It catalyses the reaction dopamine(in) + 2 H(+)(out) = dopamine(out) + 2 H(+)(in). With respect to regulation, strongly inhibited by reserpine, ketanserin and methamphetamine. Also inhibited weakly by tetrabenazine. Its function is as follows. Electrogenic antiporter that exchanges one cationic monoamine with two intravesicular protons across the membrane of secretory and synaptic vesicles. Uses the electrochemical proton gradient established by the V-type proton-pump ATPase to accumulate high concentrations of monoamines inside the vesicles prior to their release via exocytosis. Transports catecholamines and indolamines with higher affinity for serotonin. Regulates the transvesicular monoaminergic gradient that determines the quantal size. Mediates presynaptic monoaminergic vesicle transport in the amygdala and prefrontal brain regions related with emotion processing in response to environmental stimuli. The sequence is that of Chromaffin granule amine transporter (Slc18a1) from Rattus norvegicus (Rat).